Consider the following 488-residue polypeptide: MIQVLLVTICLAVFPYQGSSIILESGNVNDYEVVYPRKVTALPKGAVQLKYEDAMQYEFKVNGEPVVLHLEKNKGLFSEDYSETHYSPDGREITTYPPVEDHCYYHGRIQNDADSTASISACNGLKGHFKLQGEMYLIEPLKLSDSEAHAVYKYENVEKEDEASKMCGVTETNWESYEPIKKASQSNIPPEEEAFYQRYIELVVVADHRMYTKYDGDKTEISSIIYEIVNTLTQIFRPLHIRVALIGLEIWSSGELSKVTLSADDTLEAFGEWRKTVLMNRKRHDNAQLLTGMIFNETIEGRTYKSGMCNPKHSVGIVRDYRTRRHFVANRMAHELGHNLGIDHDRDSCTCGANSCIMSATVSNEPSSQFSDCSLNKYLNYIVRYQSTTRCLHNEPSETDIVSPPFCGNYFKEVGEDCDCGPPANCQNPCCDAATCKLTTGSQCAEGLCCDQCKFTKKGTACRPARGDWNDDTCTGQSADCPRNGLYG.

Positions 1 to 20 (MIQVLLVTICLAVFPYQGSS) are cleaved as a signal peptide. Positions 21 to 191 (IILESGNVND…KASQSNIPPE (171 aa)) are excised as a propeptide. One can recognise a Peptidase M12B domain in the interval 198–396 (RYIELVVVAD…STTRCLHNEP (199 aa)). The Ca(2+) site is built by E201 and D285. The N-linked (GlcNAc...) asparagine glycan is linked to N296. 3 disulfide bridges follow: C309–C391, C349–C373, and C351–C356. H334 contributes to the Zn(2+) binding site. E335 is a catalytic residue. Residues H338 and H344 each coordinate Zn(2+). The Ca(2+) site is built by C391, N394, N409, E413, E416, and D419. The Disintegrin domain maps to 404–488 (PPFCGNYFKE…ADCPRNGLYG (85 aa)). Cystine bridges form between C407–C426, C418–C436, C420–C431, C430–C453, C444–C450, C449–C474, and C462–C481. A Cell attachment site motif is present at residues 466 to 468 (RGD).

The protein belongs to the venom metalloproteinase (M12B) family. P-II subfamily. P-IIb sub-subfamily. Homodimer; disulfide-linked (disintegrin). The cofactor is Zn(2+). Expressed by the venom gland.

It localises to the secreted. Zinc metalloproteinase-disintegrin VMP-II: inhibits ADP-induced platelet aggregation (probably by binding integrin alpha-IIb/beta-3 (ITGA2B/ITGB3)) and degrades fibrinogen. Its function is as follows. Recombinant disintegrin r-Cam-dis (413-488): this recombinant protein inhibits platelet adhesion to fibrinogen (IC(50) is 1 nM), inhibits collagen- (IC(50) is 18 nM) and ADP-induced (IC(50) is 6 nM) platelet aggregation, and also inhibits platelet function on clot retraction. May act by binding integrin alpha-IIb/beta-3 (ITGA2B/ITGB3). This is Zinc metalloproteinase-disintegrin VMP-II from Crotalus adamanteus (Eastern diamondback rattlesnake).